The sequence spans 437 residues: Transmembrane protease serine 4 (437 aa).

Residues 1-32 lie on the Cytoplasmic side of the membrane; the sequence is MLQDPDSDQPLNSLDVKPLRKPRIPMETFRKV. Residues 33–53 traverse the membrane as a helical; Signal-anchor for type II membrane protein segment; the sequence is GIPIIIALLSLASIIIVVVLI. Residues 54-437 lie on the Extracellular side of the membrane; the sequence is KVILDKYYFL…WIYNVWKAEL (384 aa). The LDL-receptor class A domain occupies 61–93; sequence YFLCGQPLHFIPRKQLCDGELDCPLGEDEEHCV. 8 disulfide bridges follow: Cys-64/Cys-83, Cys-77/Cys-92, Cys-127/Cys-183, Cys-140/Cys-193, Cys-196/Cys-310, Cys-230/Cys-246, Cys-356/Cys-372, and Cys-383/Cys-410. The 111-residue stretch at 94–204 folds into the SRCR domain; sequence KSFPEGPAVA…ACGKSLKTPR (111 aa). Residues Asn-130 and Asn-178 are each glycosylated (N-linked (GlcNAc...) asparagine). Residues 205–434 form the Peptidase S1 domain; that stretch reads VVGVEEASVD…YLNWIYNVWK (230 aa). Active-site charge relay system residues include His-245 and Asp-290. Ser-387 acts as the Charge relay system in catalysis.

It belongs to the peptidase S1 family. Proteolytically processed; probably by an autocatalytic mechanism. In terms of tissue distribution, high levels in pancreatic, gastric, colorectal and ampullary cancer. Very weak expression in normal gastrointestinal and urogenital tract. Coexpressed with ACE2 within mature enterocytes.

It localises to the cell membrane. It is found in the secreted. Plasma membrane-anchored serine protease that directly induces processing of pro-uPA/PLAU into the active form through proteolytic activity. Seems to be capable of activating ENaC. Functionally, (Microbial infection) In gut epithelial cells, facilitates human coronavirus SARS-CoV-2 infection through, at least, the cleavage of coronavirus spike glycoproteins which activates the glycoprotein for host cell entry. The sequence is that of Transmembrane protease serine 4 from Homo sapiens (Human).